Reading from the N-terminus, the 562-residue chain is Dihydroxy-acid dehydratase (562 aa).

Cysteine 51 contacts [2Fe-2S] cluster. A Mg(2+)-binding site is contributed by aspartate 83. Cysteine 124 contributes to the [2Fe-2S] cluster binding site. The Mg(2+) site is built by aspartate 125 and lysine 126. N6-carboxylysine is present on lysine 126. A [2Fe-2S] cluster-binding site is contributed by cysteine 196. Glutamate 448 contributes to the Mg(2+) binding site. Serine 474 functions as the Proton acceptor in the catalytic mechanism.

This sequence belongs to the IlvD/Edd family. As to quaternary structure, homodimer. [2Fe-2S] cluster serves as cofactor. Mg(2+) is required as a cofactor.

The catalysed reaction is (2R)-2,3-dihydroxy-3-methylbutanoate = 3-methyl-2-oxobutanoate + H2O. The enzyme catalyses (2R,3R)-2,3-dihydroxy-3-methylpentanoate = (S)-3-methyl-2-oxopentanoate + H2O. It participates in amino-acid biosynthesis; L-isoleucine biosynthesis; L-isoleucine from 2-oxobutanoate: step 3/4. The protein operates within amino-acid biosynthesis; L-valine biosynthesis; L-valine from pyruvate: step 3/4. Its function is as follows. Functions in the biosynthesis of branched-chain amino acids. Catalyzes the dehydration of (2R,3R)-2,3-dihydroxy-3-methylpentanoate (2,3-dihydroxy-3-methylvalerate) into 2-oxo-3-methylpentanoate (2-oxo-3-methylvalerate) and of (2R)-2,3-dihydroxy-3-methylbutanoate (2,3-dihydroxyisovalerate) into 2-oxo-3-methylbutanoate (2-oxoisovalerate), the penultimate precursor to L-isoleucine and L-valine, respectively. The sequence is that of Dihydroxy-acid dehydratase from Pyrobaculum aerophilum (strain ATCC 51768 / DSM 7523 / JCM 9630 / CIP 104966 / NBRC 100827 / IM2).